Here is a 426-residue protein sequence, read N- to C-terminus: Cell adhesion molecule CEACAM16 (426 aa).

Residues 1–22 (MKMPLTWYSWFLLSAWILNTGA) form the signal peptide. An N-linked (GlcNAc...) asparagine glycan is attached at N38. A disordered region spans residues 77–96 (ETPGPAHTGREAVRPDGSLD). The segment covering 84–95 (TGREAVRPDGSL) has biased composition (basic and acidic residues). 2 Ig-like C2-type domains span residues 134 to 219 (PPTV…LNLT) and 224 to 310 (PERV…ASVV). A disulfide bond links C155 and C202. N217 carries N-linked (GlcNAc...) asparagine glycosylation. Residues C253 and C294 are joined by a disulfide bond.

Belongs to the immunoglobulin superfamily. CEA family. In terms of assembly, homooligomer; can for homodimers and homotetramers. Interacts with TECTA and TECTB. Expressed in cochlear outer hair cells (OHC).

It localises to the secreted. In terms of biological role, required for proper hearing, plays a role in maintaining the integrity of the tectorial membrane. The chain is Cell adhesion molecule CEACAM16 from Mus musculus (Mouse).